Consider the following 1014-residue polypeptide: Collagen alpha-1(I) chain (1014 aa).

The interval Ser1–Pro1014 is disordered. A compositionally biased stretch (low complexity) spans Gly9 to Arg22. A 4-hydroxyproline mark is found at Pro25, Pro28, Pro30, Pro39, Pro42, Pro45, Pro60, Pro75, Pro81, Pro90, and Pro96. Residues Gln33–Met51 are compositionally biased toward low complexity. Residues Asn63–Glu77 show a composition bias toward basic and acidic residues. Residue Lys99 is modified to 5-hydroxylysine; alternate. O-linked (Gal...) hydroxylysine; alternate glycosylation is present at Lys99. Ser105 bears the Phosphoserine mark. Low complexity predominate over residues Asp113–Asn129. 4-hydroxyproline is present on residues Pro123, Pro126, Pro132, Pro141, Pro147, Pro168, Pro177, Pro180, Pro207, Pro210, Pro222, Pro228, Pro237, Pro243, Pro246, and Pro261. Low complexity predominate over residues Pro147–Ala165. Over residues Pro167–Phe179 the composition is skewed to pro residues. The span at Ala213 to Ser252 shows a compositional bias: low complexity. The residue at position 264 (Lys264) is a 5-hydroxylysine. 4-hydroxyproline is present on residues Pro270, Pro273, Pro285, Pro294, Pro309, Pro315, Pro324, and Pro330. The span at Gly319–Gly328 shows a compositional bias: gly residues. Position 339 is a 5-hydroxylysine (Lys339). 4-hydroxyproline is present on residues Pro348, Pro357, Pro363, Pro369, Pro378, Pro381, Pro390, Pro399, Pro405, Pro417, Pro426, Pro435, Pro438, Pro456, Pro473, Pro479, Pro485, Pro491, Pro497, Pro503, Pro515, Pro524, Pro535, Pro548, Pro554, and Pro563. A compositionally biased stretch (low complexity) spans Lys372–Arg398. The span at Ala407 to Pro426 shows a compositional bias: low complexity. A compositionally biased stretch (low complexity) spans Pro485–Gln494. The residue at position 575 (Lys575) is a 5-hydroxylysine. A 4-hydroxyproline mark is found at Pro581, Pro596, and Pro602. The segment covering Ser608–Ala622 has biased composition (low complexity). The residue at position 611 (Ser611) is a Phosphoserine. A 4-hydroxyproline mark is found at Pro623, Pro629, Pro632, Pro641, Pro647, Pro674, and Pro683. Low complexity predominate over residues Ala635–Ser665. Position 686 is a 5-hydroxylysine (Lys686). Positions Ser691–Val707 are enriched in low complexity. 4-hydroxyproline is present on residues Pro695 and Pro701. Pro709 is modified (3-hydroxyproline). Pro710, Pro719, Pro722, Pro743, Pro752, Pro760, Pro769, Pro787, Pro796, Pro799, Pro805, Pro820, Pro826, Pro832, Pro841, and Pro847 each carry 4-hydroxyproline. Positions Glu736–Glu745 are enriched in low complexity. Positions Lys757–Pro769 are enriched in low complexity. Over residues Pro819–Ala829 the composition is skewed to pro residues. Lys856 carries the 5-hydroxylysine modification. Pro residues predominate over residues Pro864–Val879. Pro867, Pro870, and Pro873 each carry 4-hydroxyproline. A compositionally biased stretch (low complexity) spans Ala900 to Pro914. Basic and acidic residues predominate over residues Arg915–Ile929. Lys918 carries the 5-hydroxylysine modification. Position 930 is a 5-hydroxylysine; alternate (Lys930). The O-linked (Gal...) hydroxylysine; alternate glycan is linked to Lys930. A 4-hydroxyproline mark is found at Pro945, Pro948, Pro966, and Pro981. Low complexity predominate over residues Pro948–Pro981. Pro986 carries the 3-hydroxyproline modification. Pro987 bears the 4-hydroxyproline mark. Residues Val999–Pro1014 are compositionally biased toward pro residues. Position 1001 is a 3-hydroxyproline (Pro1001). Position 1002 is a 4-hydroxyproline (Pro1002). Pro1004 is subject to 3-hydroxyproline. At Pro1005 the chain carries 4-hydroxyproline. Pro1007 is subject to 3-hydroxyproline. Residues Pro1008, Pro1011, and Pro1014 each carry the 4-hydroxyproline modification.

It belongs to the fibrillar collagen family. In terms of assembly, trimers of one alpha 2(I) and two alpha 1(I) chains. Contains mostly 4-hydroxyproline. Proline residues at the third position of the tripeptide repeating unit (G-X-Y) are hydroxylated in some or all of the chains. Post-translationally, contains 3-hydroxyproline at a few sites. This modification occurs on the first proline residue in the sequence motif Gly-Pro-Hyp, where Hyp is 4-hydroxyproline. In terms of processing, lysine residues at the third position of the tripeptide repeating unit (G-X-Y) are 5-hydroxylated in some or all of the chains. O-glycosylated on hydroxylated lysine residues. The O-linked glycan consists of a Glc-Gal disaccharide. In terms of tissue distribution, expressed in bones.

The protein resides in the secreted. The protein localises to the extracellular space. It is found in the extracellular matrix. Its function is as follows. Type I collagen is a member of group I collagen (fibrillar forming collagen). The sequence is that of Collagen alpha-1(I) chain from Megatherium americanum (Giant ground sloth).